The chain runs to 362 residues: G-protein coupled receptor homolog US27 (362 aa).

The Virion surface portion of the chain corresponds to 1–34 (MTTSTNNQTLTQVSNMTNHTLNSTEIYQLFEYTR). N-linked (GlcNAc...) asparagine; by host glycosylation is found at N7, N15, N18, and N22. The helical transmembrane segment at 35–58 (LGVWLMCIVGTFLNVLVITTILYY) threads the bilayer. The Intravirion portion of the chain corresponds to 59-67 (RRKKKSPSD). The helical transmembrane segment at 68-90 (TYICNLAVADLLIVVGLPFFLEY) threads the bilayer. The Virion surface portion of the chain corresponds to 91–104 (AKHHPKLSREVVCS). A helical membrane pass occupies residues 105–126 (GLNACFYICLFAGVCFLINLSM). The Intravirion segment spans residues 127 to 148 (DRYCVIVWGVELNRVRNNKRAT). Residues 149–167 (CWVVIFWILAVLMGMPHYL) traverse the membrane as a helical segment. Residues 168 to 193 (MYSHTNNECVGEFANETSGWFPVFLN) lie on the Virion surface side of the membrane. Residues 194–213 (TKVNICGYLAPIALMAYTYN) traverse the membrane as a helical segment. Residues 214–233 (RMVRFIINYVGKWHMQTLHV) are Intravirion-facing. A helical transmembrane segment spans residues 234-257 (LLVVVVSFASFWFPFNLALFLESI). Residues 258–274 (RLLAGVYNDTLQNVIIF) are Virion surface-facing. Residues 275 to 298 (CLYVGQFLAYVRACLNPGIYILVG) traverse the membrane as a helical segment. At 299–362 (TQMRKDMWTT…MESGEEEFLL (64 aa)) the chain is on the intravirion side. A disordered region spans residues 341–362 (TKRTHYDRKNAPMESGEEEFLL).

Belongs to the G-protein coupled receptor 1 family. Heterodimer with US28. Interacts with host Gi alpha-1 subunit GNAI1; this interaction does not lead to the catalytic activation of Gi complex.

It localises to the virion. The protein localises to the host cell membrane. Its function is as follows. Interacts with the host Gi complex without activating it, thereby probably interfering with the chemokine-Gi signaling. May also function as a G protein sink to sequester G protein from the cell surface via internalization. Plays an important role in spread of HCMV via the extracellular route. This chain is G-protein coupled receptor homolog US27 (US27), found in Homo sapiens (Human).